Here is a 342-residue protein sequence, read N- to C-terminus: N-acetyl-gamma-glutamyl-phosphate reductase (342 aa).

Cys-147 is an active-site residue.

Belongs to the NAGSA dehydrogenase family. Type 1 subfamily.

The protein resides in the cytoplasm. The catalysed reaction is N-acetyl-L-glutamate 5-semialdehyde + phosphate + NADP(+) = N-acetyl-L-glutamyl 5-phosphate + NADPH + H(+). Its pathway is amino-acid biosynthesis; L-arginine biosynthesis; N(2)-acetyl-L-ornithine from L-glutamate: step 3/4. Functionally, catalyzes the NADPH-dependent reduction of N-acetyl-5-glutamyl phosphate to yield N-acetyl-L-glutamate 5-semialdehyde. The polypeptide is N-acetyl-gamma-glutamyl-phosphate reductase (Campylobacter jejuni subsp. doylei (strain ATCC BAA-1458 / RM4099 / 269.97)).